Consider the following 119-residue polypeptide: RKLAFRYRRVKELYNTYKNNIGGLLGPAKRDAWLQLRAEIEALTDSWLTNALKSLSIISTRSNCVNVLVTTTQLIPALAKVLLYSLGGAFPIENIYSATKIGKESCFERIVSRFGTNIT.

Belongs to the HAD-like hydrolase superfamily. EYA family. It depends on Mg(2+) as a cofactor.

The protein resides in the cytoplasm. Its subcellular location is the nucleus. It catalyses the reaction O-phospho-L-tyrosyl-[protein] + H2O = L-tyrosyl-[protein] + phosphate. Functionally, tyrosine phosphatase that specifically dephosphorylates 'Tyr-142' of histone H2AX (H2AXY142ph). 'Tyr-142' phosphorylation of histone H2AX plays a central role in DNA repair and acts as a mark that distinguishes between apoptotic and repair responses to genotoxic stress. Promotes efficient DNA repair by dephosphorylating H2AX, promoting the recruitment of DNA repair complexes containing MDC1. Its function as histone phosphatase probably explains its role in transcription regulation during organogenesis. May be involved in development of the eye. The polypeptide is Protein phosphatase EYA4 (EYA4) (Gallus gallus (Chicken)).